Here is a 335-residue protein sequence, read N- to C-terminus: MMLYFFDPVYMMLAVLGYFVMLLLASTIAPKVASRVSGKFSLFTSMVLLAGMILAISAAIIYLILAYAGVYISFYGLIIFLLIINLLMYLLSPYIINLSYGAQRDERLQMVVNSVARRLNVKPPKAVVVRSPPNAFAYGNFLTGKFVAVSESLMRMLSQEELEAVIGHEIGHHKHRDNAVMLLFGLLPSVIFYLGYALLHSSMRDDRRGAQLAAIGIAAVIVSFIVQILVLAFSRLREYYADFEGVRATNKDAMQRSLAKIHLFYHRYPDYLAPIQDSKFRTLFIYAFTNAVAEPITRADIEALKNMKVSPIQEFLSTHPPLPKRLRFIESIRVF.

A run of 3 helical transmembrane segments spans residues 9-29 (VYMM…STIA), 42-62 (LFTS…AIIY), and 64-84 (ILAY…LLII). Histidine 168 contributes to the Zn(2+) binding site. The active site involves glutamate 169. Residue histidine 172 coordinates Zn(2+). Transmembrane regions (helical) follow at residues 179-199 (AVML…YALL) and 213-233 (AAIG…VLAF). A Zn(2+)-binding site is contributed by glutamate 238.

This sequence belongs to the peptidase M48B family. Zn(2+) serves as cofactor.

It localises to the cell membrane. The polypeptide is Protease HtpX homolog (Archaeoglobus fulgidus (strain ATCC 49558 / DSM 4304 / JCM 9628 / NBRC 100126 / VC-16)).